We begin with the raw amino-acid sequence, 404 residues long: Probable sugar efflux transporter (404 aa).

12 helical membrane passes run 15-35 (VITF…PVAL), 51-71 (GLII…FMLL), 85-105 (LVLF…WVLV), 109-129 (IGVA…VIRV), 137-157 (QAIG…LPLG), 168-188 (ATFA…YQLL), 209-229 (PLLL…FTAY), 245-265 (SMAT…SLLF), 276-296 (FILF…IASQ), 299-319 (WTMF…GLGL), 333-353 (VAMA…ALLG), and 363-383 (AYIG…FILV).

Belongs to the major facilitator superfamily. SotB (TC 2.A.1.2) family.

It is found in the cell inner membrane. Involved in the efflux of sugars. The physiological role may be the reduction of the intracellular concentration of toxic sugars or sugar metabolites. The sequence is that of Probable sugar efflux transporter from Pasteurella multocida (strain Pm70).